We begin with the raw amino-acid sequence, 396 residues long: G-protein coupled receptor 84 (396 aa).

Over 1–21 (MWNSSDANFSCYHESVLGYRY) the chain is Extracellular. 2 N-linked (GlcNAc...) asparagine glycosylation sites follow: Asn-3 and Asn-8. Residues 22–42 (FAVIWGVAVAVTGTVGNVLTL) form a helical membrane-spanning segment. Residues 43–57 (LALAIRPKLRTRFNL) lie on the Cytoplasmic side of the membrane. The helical transmembrane segment at 58 to 78 (LIANLTLADLLYCTLLQPFSV) threads the bilayer. At 79-94 (DTYLHLHWRTGAVFCR) the chain is on the extracellular side. Residues 95–115 (IFGLLLFTSNSVSILTLCLIA) traverse the membrane as a helical segment. The Cytoplasmic portion of the chain corresponds to 116-135 (LGRYLLIAHPKLFPQVFSAK). Residues 136-156 (GIVLALVGSWVVGVTSFAPLW) form a helical membrane-spanning segment. Topologically, residues 157-180 (NVFVLVPVVCTCSFDRMRGRPYTT) are extracellular. Residues 181–201 (ILMGIYFVLGLSSVGVFYCLI) form a helical membrane-spanning segment. Over 202–320 (HRQVKRAARA…PSEFGKVTRM (119 aa)) the chain is Cytoplasmic. 2 positions are modified to phosphoserine: Ser-221 and Ser-224. The disordered stretch occupies residues 241 to 310 (LDSGVASRGP…TAGARRATDA (70 aa)). The span at 253–269 (GISSEPVSAATTQTLEG) shows a compositional bias: polar residues. 2 positions are modified to phosphothreonine: Thr-263 and Thr-264. Basic and acidic residues predominate over residues 290-308 (SLPEVHRKPRETAGARRAT). The chain crosses the membrane as a helical span at residues 321 to 341 (CFAVFLCFALSYIPFLLLNIL). The Extracellular segment spans residues 342–352 (DARGRAPRVVH). A helical transmembrane segment spans residues 353–373 (MVAANLTWLNSCINPVLYAAM). Residues 374–396 (NRQFRHAYGSILKRGPQSFRRFH) lie on the Cytoplasmic side of the membrane.

This sequence belongs to the G-protein coupled receptor 1 family. As to quaternary structure, interacts with ARRB2 and ARR3. Phosphorylated by a subset of GPR84-activating ligands. Constitutively phosphorylated at Ser-221 and Ser-224 in the absence of 2-HTP. By contrast, Thr-263 and Thr-264 are phosphorylated only following prior cell treatment with 2-HTP. In terms of tissue distribution, expressed predominantly in hematopoietic tissues. Expressed mainly in the bone marrow with transcripts also detected in spleen, the lymph node, liver and the lung.

Its subcellular location is the cell membrane. G protein-coupled receptor that responds endogenously to dietary fatty acids or nutrient, specifically medium-chain free fatty acid (FFA) with carbon chain lengths of C9 to C14. Capric acid (C10:0), undecanoic acid (C11:0) and lauric acid (C12:0) are the most potent agonists. In immune cells, functions as a pro-inflammatory receptor via 6-OAU and promotes the expression of pro-inflammatory mediators such as TNFalpha, IL-6 and IL-12B as well as stimulating chemotactic responses through activation of signaling mediators AKT, ERK and NF-kappa-B (by sim). In addition, triggers increased bacterial adhesion and phagocytosis in macrophages and regulates pro-inflammatory function via enhancing NLRP3 inflammasome activation. Also plays an important role in inflammation by modulating neutrophil functions. Mechanistically, promotes neutrophil chemotaxis, reactive oxygen species (ROS) production and degranulation via LYN-AKT/ERK pathway. To regulate ROS production, communicates with the two formyl peptide receptors FPR2 and FPR1 to control the NADPH oxidase activity in neutrophils. The polypeptide is G-protein coupled receptor 84 (Gpr84) (Mus musculus (Mouse)).